A 692-amino-acid polypeptide reads, in one-letter code: Single-strand DNA endonuclease ASTE1 (692 aa).

It belongs to the asteroid family.

Its function is as follows. Structure-specific DNA endonuclease that specifically cleaves single-stranded DNA and 3' overhang DNA. This chain is Single-strand DNA endonuclease ASTE1 (aste1a), found in Danio rerio (Zebrafish).